A 164-amino-acid polypeptide reads, in one-letter code: 6,7-dimethyl-8-ribityllumazine synthase (164 aa).

5-amino-6-(D-ribitylamino)uracil contacts are provided by residues phenylalanine 28, 62–64 (ALE), and 86–88 (AVI). 91 to 92 (ET) contacts (2S)-2-hydroxy-3-oxobutyl phosphate. The active-site Proton donor is the histidine 94. Residue asparagine 119 coordinates 5-amino-6-(D-ribitylamino)uracil. Arginine 133 is a (2S)-2-hydroxy-3-oxobutyl phosphate binding site.

Belongs to the DMRL synthase family.

The catalysed reaction is (2S)-2-hydroxy-3-oxobutyl phosphate + 5-amino-6-(D-ribitylamino)uracil = 6,7-dimethyl-8-(1-D-ribityl)lumazine + phosphate + 2 H2O + H(+). It functions in the pathway cofactor biosynthesis; riboflavin biosynthesis; riboflavin from 2-hydroxy-3-oxobutyl phosphate and 5-amino-6-(D-ribitylamino)uracil: step 1/2. Functionally, catalyzes the formation of 6,7-dimethyl-8-ribityllumazine by condensation of 5-amino-6-(D-ribitylamino)uracil with 3,4-dihydroxy-2-butanone 4-phosphate. This is the penultimate step in the biosynthesis of riboflavin. The sequence is that of 6,7-dimethyl-8-ribityllumazine synthase from Nitrosomonas europaea (strain ATCC 19718 / CIP 103999 / KCTC 2705 / NBRC 14298).